Reading from the N-terminus, the 142-residue chain is Immunoglobulin omega chain (142 aa).

The signal sequence occupies residues 1–19 (MAWTSVLLMLLAHLTGCGP). Residues 20–41 (QPMVHQPPSASSSLGATIRLSC) form a framework-1 region. A disulfide bridge links Cys-41 with Cys-115. The segment at 42–56 (TLSNDHNIGIYSIYW) is complementarity-determining-1. Positions 57–70 (YQQRPGHPPRFLLR) are framework-2. Positions 71-81 (YFSHSDKHQGP) are complementarity-determining-2. The framework-3 stretch occupies residues 82–115 (DIPPRFSGSKDTARNLGYLSISELQPEDEAVYYC).

It belongs to the immunoglobulin superfamily. Only expressed by pre-B-cells.

In terms of biological role, associates with the Ig-mu chain to form a molecular complex that is expressed on the surface of pre-B-cells. This complex presumably regulates Ig gene rearrangements in the early steps of B-cell differentiation. The protein is Immunoglobulin omega chain of Mus musculus (Mouse).